The primary structure comprises 557 residues: Formate--tetrahydrofolate ligase (557 aa).

An ATP-binding site is contributed by 44–51; sequence TPLGEGKS.

It belongs to the formate--tetrahydrofolate ligase family.

It carries out the reaction (6S)-5,6,7,8-tetrahydrofolate + formate + ATP = (6R)-10-formyltetrahydrofolate + ADP + phosphate. The protein operates within one-carbon metabolism; tetrahydrofolate interconversion. The polypeptide is Formate--tetrahydrofolate ligase (Desulfotalea psychrophila (strain LSv54 / DSM 12343)).